Consider the following 1587-residue polypeptide: DNA topoisomerase 2 (1587 aa).

Positions 1–15 (MSDADPFDMSDDDDN) are enriched in acidic residues. Residues 1 to 47 (MSDADPFDMSDDDDNSVLSHTPPKKQKKAPTTKKGGSKPLADVENES) form a disordered region. Basic residues predominate over residues 22–31 (PPKKQKKAPT). ATP contacts are provided by residues asparagine 126, asparagine 155, 183 to 185 (SSN), and 196 to 203 (GRNGFGAK). Interaction with DNA regions lie at residues 381 to 383 (KKK) and 381 to 386 (KKKNKN). 415-417 (QTK) lines the ATP pocket. The tract at residues 461 to 485 (MLKKTDGGRRSRMNNPKLTDANKAG) is disordered. Residues 492–606 (CTLILTEGDS…SLLKIPEFLI (115 aa)) form the Toprim domain. Mg(2+) contacts are provided by glutamate 498, aspartate 575, and aspartate 577. The region spanning 743 to 1190 (IPSVVDGLKP…SKEDIWKRDL (448 aa)) is the Topo IIA-type catalytic domain. The active-site O-(5'-phospho-DNA)-tyrosine intermediate is tyrosine 833. The interval 1016–1025 (KLSKTMTTTN) is interaction with DNA. A disordered region spans residues 1204 to 1587 (EARRQRKVAN…PRPRRPRRRS (384 aa)). The segment covering 1271-1280 (LSFLGKSSAK) has biased composition (low complexity). Residues 1308-1320 (PKSEPKADPKPKD) show a composition bias toward basic and acidic residues. Acidic residues predominate over residues 1321 to 1334 (EDEDIVMEDSDIEE). Positions 1348 to 1364 (VKPESEDGQAKIAEAPK) are enriched in basic and acidic residues. Positions 1365–1375 (RGRAAAKPKPK) are enriched in basic residues. 2 stretches are compositionally biased toward acidic residues: residues 1379–1391 (EDEEDELDDDDFM) and 1419–1430 (SDSDSDNGDDLL). Composition is skewed to polar residues over residues 1441 to 1451 (GSTNGASTSDS) and 1466 to 1475 (GLKTTASKAS). The span at 1512-1521 (DNEPEDDDDE) shows a compositional bias: acidic residues. Residues 1524–1542 (KPAAKGKAAAKGKSTAAAA) are compositionally biased toward low complexity. Residues 1558–1568 (PKPPPRLPCPL) are compositionally biased toward pro residues. Residues 1571–1587 (RRTHRSNPRPRRPRRRS) show a composition bias toward basic residues.

The protein belongs to the type II topoisomerase family. Homodimer. Mg(2+) is required as a cofactor. The cofactor is Mn(2+). Requires Ca(2+) as cofactor.

The protein resides in the nucleus. The catalysed reaction is ATP-dependent breakage, passage and rejoining of double-stranded DNA.. Functionally, control of topological states of DNA by transient breakage and subsequent rejoining of DNA strands. Topoisomerase II makes double-strand breaks. In Penicillium chrysogenum (Penicillium notatum), this protein is DNA topoisomerase 2 (TOP2).